The following is a 99-amino-acid chain: Glycine-rich protein (99 aa).

The N-terminal stretch at 1-18 (MKSMIAVLLLALVATSMA) is a signal peptide.

Belongs to the non-disulfide-bridged peptide (NDBP) superfamily. In terms of tissue distribution, expressed by the venom gland.

Its subcellular location is the secreted. In Lychas mucronatus (Chinese swimming scorpion), this protein is Glycine-rich protein.